The chain runs to 314 residues: 4-hydroxy-3-methylbut-2-enyl diphosphate reductase (314 aa).

C12 contacts [4Fe-4S] cluster. (2E)-4-hydroxy-3-methylbut-2-enyl diphosphate is bound by residues H41 and H74. Residues H41 and H74 each coordinate dimethylallyl diphosphate. Residues H41 and H74 each coordinate isopentenyl diphosphate. C96 serves as a coordination point for [4Fe-4S] cluster. (2E)-4-hydroxy-3-methylbut-2-enyl diphosphate is bound at residue H124. H124 contributes to the dimethylallyl diphosphate binding site. H124 is an isopentenyl diphosphate binding site. The Proton donor role is filled by E126. T167 is a binding site for (2E)-4-hydroxy-3-methylbut-2-enyl diphosphate. C197 lines the [4Fe-4S] cluster pocket. 4 residues coordinate (2E)-4-hydroxy-3-methylbut-2-enyl diphosphate: S225, S226, N227, and S269. The dimethylallyl diphosphate site is built by S225, S226, N227, and S269. 4 residues coordinate isopentenyl diphosphate: S225, S226, N227, and S269.

The protein belongs to the IspH family. The cofactor is [4Fe-4S] cluster.

The enzyme catalyses isopentenyl diphosphate + 2 oxidized [2Fe-2S]-[ferredoxin] + H2O = (2E)-4-hydroxy-3-methylbut-2-enyl diphosphate + 2 reduced [2Fe-2S]-[ferredoxin] + 2 H(+). It carries out the reaction dimethylallyl diphosphate + 2 oxidized [2Fe-2S]-[ferredoxin] + H2O = (2E)-4-hydroxy-3-methylbut-2-enyl diphosphate + 2 reduced [2Fe-2S]-[ferredoxin] + 2 H(+). It functions in the pathway isoprenoid biosynthesis; dimethylallyl diphosphate biosynthesis; dimethylallyl diphosphate from (2E)-4-hydroxy-3-methylbutenyl diphosphate: step 1/1. It participates in isoprenoid biosynthesis; isopentenyl diphosphate biosynthesis via DXP pathway; isopentenyl diphosphate from 1-deoxy-D-xylulose 5-phosphate: step 6/6. Its function is as follows. Catalyzes the conversion of 1-hydroxy-2-methyl-2-(E)-butenyl 4-diphosphate (HMBPP) into a mixture of isopentenyl diphosphate (IPP) and dimethylallyl diphosphate (DMAPP). Acts in the terminal step of the DOXP/MEP pathway for isoprenoid precursor biosynthesis. The sequence is that of 4-hydroxy-3-methylbut-2-enyl diphosphate reductase from Haemophilus influenzae (strain ATCC 51907 / DSM 11121 / KW20 / Rd).